The chain runs to 471 residues: Mannose-1-phosphate guanylyltransferase (471 aa).

This sequence belongs to the mannose-6-phosphate isomerase type 2 family.

It carries out the reaction alpha-D-mannose 1-phosphate + GTP + H(+) = GDP-alpha-D-mannose + diphosphate. It functions in the pathway nucleotide-sugar biosynthesis; GDP-alpha-D-mannose biosynthesis; GDP-alpha-D-mannose from alpha-D-mannose 1-phosphate (GTP route): step 1/1. Its function is as follows. Involved in the biosynthesis of the K2 capsular polysaccharide biosynthesis. This Klebsiella pneumoniae protein is Mannose-1-phosphate guanylyltransferase (manC).